Here is a 93-residue protein sequence, read N- to C-terminus: Large ribosomal subunit protein bL31B (93 aa).

The protein belongs to the bacterial ribosomal protein bL31 family. Type B subfamily. Part of the 50S ribosomal subunit.

This Pseudomonas syringae pv. tomato (strain ATCC BAA-871 / DC3000) protein is Large ribosomal subunit protein bL31B.